The primary structure comprises 238 residues: Beta-glucanase (238 aa).

The signal sequence occupies residues 1-26 (MMKKKSWFTLMITGVISLFFSVSAFA). Positions 29–238 (VFWEPLSYFN…EYDWVKYTSN (210 aa)) constitute a GH16 domain. A disulfide bridge connects residues Cys56 and Cys85. Glu129 serves as the catalytic Nucleophile. Glu133 functions as the Proton donor in the catalytic mechanism.

This sequence belongs to the glycosyl hydrolase 16 family.

It catalyses the reaction Hydrolysis of (1-&gt;4)-beta-D-glucosidic linkages in beta-D-glucans containing (1-&gt;3)- and (1-&gt;4)-bonds.. The sequence is that of Beta-glucanase (gluB) from Paenibacillus polymyxa (Bacillus polymyxa).